The following is a 151-amino-acid chain: Class I hydrophobin A (151 aa).

The first 17 residues, 1 to 17, serve as a signal peptide directing secretion; the sequence is MQFSVAAVLALATAVAA. Cystine bridges form between Cys-52–Cys-125, Cys-60–Cys-119, Cys-61–Cys-101, and Cys-126–Cys-144.

The protein belongs to the fungal hydrophobin family. As to quaternary structure, interacts with cutinase cutL1 in a pH-dependent manner. Self-assembles to form functional amyloid fibrils called rodlets. Self-assembly into fibrillar rodlets occurs spontaneously at hydrophobic:hydrophilic interfaces and the rodlets further associate laterally to form amphipathic monolayers. rolA rodlet formation is regulated by the strength of ionic interactions between rolA molecules. Three types of self-assembled structures of rolA are observed: spherical, rod-like, and mesh-like.

The protein localises to the secreted. It localises to the cell wall. Aerial growth, conidiation, and dispersal of filamentous fungi in the environment rely upon a capability of their secreting small amphipathic proteins called hydrophobins (HPBs) with low sequence identity. Class I can self-assemble into an outermost layer of rodlet bundles on aerial cell surfaces, conferring cellular hydrophobicity that supports fungal growth, development and dispersal; whereas Class II form highly ordered films at water-air interfaces through intermolecular interactions but contribute nothing to the rodlet structure. RolA is a class I hydrophobin that undergoes a conformational change after its adsorption to hydrophobic surfaces such as the biodegradable polyester polybutylene succinate-coadipate (PBSA) and recruits the cutinase cutL1, resulting in condensation of cutL1 on the PBSA surface and consequent stimulation of PBSA hydrolysis. Increases also the activity of polyethylene terephthalate hydrolase (PETase) that hydrolyzes polyethylene terephthalate (PET), one of the most well-known polyesters that is widely used as packaging material, when the PET samples are preincubated with the hydrophobin. The wetting effect of rolA probably acts on PET surface to become hydrophilic, which leads PETase easier to contact and attack the surface. This Aspergillus oryzae (strain ATCC 42149 / RIB 40) (Yellow koji mold) protein is Class I hydrophobin A.